The sequence spans 185 residues: Elongation factor P (185 aa).

The protein belongs to the elongation factor P family.

The protein resides in the cytoplasm. The protein operates within protein biosynthesis; polypeptide chain elongation. Functionally, involved in peptide bond synthesis. Stimulates efficient translation and peptide-bond synthesis on native or reconstituted 70S ribosomes in vitro. Probably functions indirectly by altering the affinity of the ribosome for aminoacyl-tRNA, thus increasing their reactivity as acceptors for peptidyl transferase. This is Elongation factor P from Endomicrobium trichonymphae.